Consider the following 774-residue polypeptide: Acetyl-CoA decarbonylase/synthase complex subunit alpha (774 aa).

Residues Cys73, Cys76, Cys77, Cys79, Cys84, and Cys94 each coordinate [4Fe-4S] cluster. His117 is a binding site for CO. 3 residues coordinate [Ni-4Fe-4S] cluster: His251, Cys279, and Cys318. 4Fe-4S ferredoxin-type domains lie at 398–427 and 436–466; these read LNEV…VKEA and FKGF…VSMT. [4Fe-4S] cluster-binding residues include Cys408, Cys411, Cys414, Cys418, Cys446, Cys449, Cys452, and Cys456. The [Ni-4Fe-4S] cluster site is built by Cys514, Cys543, and Cys578.

Belongs to the Ni-containing carbon monoxide dehydrogenase family. As to quaternary structure, heterotetramer of two alpha and two epsilon subunits. The ACDS complex is made up of alpha, epsilon, beta, gamma and delta subunits with a probable stoichiometry of (alpha(2)epsilon(2))(4)-beta(8)-(gamma(1)delta(1))(8). The cofactor is [4Fe-4S] cluster. [Ni-4Fe-4S] cluster serves as cofactor.

It carries out the reaction CO + 2 oxidized [2Fe-2S]-[ferredoxin] + H2O = 2 reduced [2Fe-2S]-[ferredoxin] + CO2 + 2 H(+). In terms of biological role, part of the ACDS complex that catalyzes the reversible cleavage of acetyl-CoA, allowing autotrophic growth from CO(2). The alpha-epsilon subcomponent functions as a carbon monoxide dehydrogenase. This chain is Acetyl-CoA decarbonylase/synthase complex subunit alpha, found in Methanocaldococcus jannaschii (strain ATCC 43067 / DSM 2661 / JAL-1 / JCM 10045 / NBRC 100440) (Methanococcus jannaschii).